Reading from the N-terminus, the 94-residue chain is ESAT-6-like protein EsxL (94 aa).

Belongs to the WXG100 family. ESAT-6 subfamily. As to quaternary structure, strongly interacts with EsxK to form a heterodimeric complex under reducing conditions.

It is found in the secreted. The chain is ESAT-6-like protein EsxL from Mycobacterium bovis (strain ATCC BAA-935 / AF2122/97).